The primary structure comprises 117 residues: Large ribosomal subunit protein bL20c (117 aa).

The protein belongs to the bacterial ribosomal protein bL20 family.

The protein localises to the plastid. It localises to the chloroplast. Its function is as follows. Binds directly to 23S ribosomal RNA and is necessary for the in vitro assembly process of the 50S ribosomal subunit. It is not involved in the protein synthesizing functions of that subunit. The protein is Large ribosomal subunit protein bL20c of Buxus microphylla (Littleleaf boxwood).